Here is a 387-residue protein sequence, read N- to C-terminus: 3-ketoacyl-CoA thiolase (387 aa).

Cysteine 91 (acyl-thioester intermediate) is an active-site residue. Active-site proton acceptor residues include histidine 343 and cysteine 373.

Belongs to the thiolase-like superfamily. Thiolase family. In terms of assembly, heterotetramer of two alpha chains (FadB) and two beta chains (FadA).

It localises to the cytoplasm. The catalysed reaction is an acyl-CoA + acetyl-CoA = a 3-oxoacyl-CoA + CoA. It participates in lipid metabolism; fatty acid beta-oxidation. Functionally, catalyzes the final step of fatty acid oxidation in which acetyl-CoA is released and the CoA ester of a fatty acid two carbons shorter is formed. In Serratia proteamaculans (strain 568), this protein is 3-ketoacyl-CoA thiolase.